The sequence spans 100 residues: MICOS complex subunit MIC12 (100 aa).

The helical transmembrane segment at 10 to 26 (FATISSVAAASLYLYAI) threads the bilayer.

It belongs to the MICOS complex subunit Mic12 family. As to quaternary structure, component of the mitochondrial contact site and cristae organizing system (MICOS) complex.

It is found in the mitochondrion inner membrane. Its function is as follows. Component of the MICOS complex, a large protein complex of the mitochondrial inner membrane that plays crucial roles in the maintenance of crista junctions, inner membrane architecture, and formation of contact sites to the outer membrane. The protein is MICOS complex subunit MIC12 (AIM5) of Vanderwaltozyma polyspora (strain ATCC 22028 / DSM 70294 / BCRC 21397 / CBS 2163 / NBRC 10782 / NRRL Y-8283 / UCD 57-17) (Kluyveromyces polysporus).